The sequence spans 492 residues: Aspartyl/glutamyl-tRNA(Asn/Gln) amidotransferase subunit B (492 aa).

It belongs to the GatB/GatE family. GatB subfamily. In terms of assembly, heterotrimer of A, B and C subunits.

It carries out the reaction L-glutamyl-tRNA(Gln) + L-glutamine + ATP + H2O = L-glutaminyl-tRNA(Gln) + L-glutamate + ADP + phosphate + H(+). The enzyme catalyses L-aspartyl-tRNA(Asn) + L-glutamine + ATP + H2O = L-asparaginyl-tRNA(Asn) + L-glutamate + ADP + phosphate + 2 H(+). Allows the formation of correctly charged Asn-tRNA(Asn) or Gln-tRNA(Gln) through the transamidation of misacylated Asp-tRNA(Asn) or Glu-tRNA(Gln) in organisms which lack either or both of asparaginyl-tRNA or glutaminyl-tRNA synthetases. The reaction takes place in the presence of glutamine and ATP through an activated phospho-Asp-tRNA(Asn) or phospho-Glu-tRNA(Gln). In Prochlorococcus marinus (strain SARG / CCMP1375 / SS120), this protein is Aspartyl/glutamyl-tRNA(Asn/Gln) amidotransferase subunit B.